Here is a 492-residue protein sequence, read N- to C-terminus: Homoserine O-acetyltransferase (492 aa).

Residues 47 to 354 form the AB hydrolase-1 domain; it reads NVILVCHALT…NYGHDAFLLE (308 aa). Ser152 (nucleophile) is an active-site residue. Arg221 contacts substrate. Residues Asp315 and His348 contribute to the active site. Position 349 (Asp349) interacts with substrate. CBS domains follow at residues 375–432 and 436–492; these read MKLD…FTTL and LTKN…HRCT.

It belongs to the AB hydrolase superfamily. MetX family. Homodimer.

The protein localises to the cytoplasm. It catalyses the reaction L-homoserine + acetyl-CoA = O-acetyl-L-homoserine + CoA. The protein operates within amino-acid biosynthesis; L-methionine biosynthesis via de novo pathway; O-acetyl-L-homoserine from L-homoserine: step 1/1. Functionally, transfers an acetyl group from acetyl-CoA to L-homoserine, forming acetyl-L-homoserine. This is Homoserine O-acetyltransferase from Methanosalsum zhilinae (strain DSM 4017 / NBRC 107636 / OCM 62 / WeN5) (Methanohalophilus zhilinae).